We begin with the raw amino-acid sequence, 411 residues long: Argininosuccinate lyase (411 aa).

The protein belongs to the lyase 1 family. Argininosuccinate lyase subfamily.

The protein localises to the cytoplasm. It carries out the reaction 2-(N(omega)-L-arginino)succinate = fumarate + L-arginine. It participates in amino-acid biosynthesis; L-arginine biosynthesis; L-arginine from L-ornithine and carbamoyl phosphate: step 3/3. In Legionella pneumophila subsp. pneumophila (strain Philadelphia 1 / ATCC 33152 / DSM 7513), this protein is Argininosuccinate lyase.